The chain runs to 475 residues: Putative F-box protein At1g46840 (475 aa).

The F-box domain occupies 25 to 71 (TYVLEKLHIDLVIEILSRLSAKSIAICRCVSKQWNSLLVSQDFVESF). Residues 423–433 (SSYSTTRSYKS) are compositionally biased toward low complexity. The disordered stretch occupies residues 423–475 (SSYSTTRSYKSSGKRCSDRSIGEDEQDDIGEKRGDQAAERRERSTKRGKHEVH). A compositionally biased stretch (basic and acidic residues) spans 451-464 (IGEKRGDQAAERRE). A compositionally biased stretch (basic residues) spans 465-475 (RSTKRGKHEVH).

In Arabidopsis thaliana (Mouse-ear cress), this protein is Putative F-box protein At1g46840.